A 37-amino-acid polypeptide reads, in one-letter code: Protein YhiY (37 aa).

This Escherichia coli (strain K12) protein is Protein YhiY.